A 130-amino-acid polypeptide reads, in one-letter code: Small ribosomal subunit protein uS9 (130 aa).

Belongs to the universal ribosomal protein uS9 family.

The sequence is that of Small ribosomal subunit protein uS9 from Vibrio atlanticus (strain LGP32) (Vibrio splendidus (strain Mel32)).